A 186-amino-acid polypeptide reads, in one-letter code: Testis-expressed protein 29 (186 aa).

Residues 1-56 (MKDTKEIKRSPPHLLKKFAVCDIPLYDICDYNVTRERCRSLDCCFYRGVCYEKAVP) lie on the Extracellular side of the membrane. A helical membrane pass occupies residues 57–77 (IYVQVFFTLIWFVAGAFIIAV). At 78 to 151 (IYRVIQGTKK…AGCCLWMKSK (74 aa)) the chain is on the cytoplasmic side. Disordered stretches follow at residues 104–138 (SPTPELIPEPIPEPIPEPIPEPIREPPPPVKKTES) and 151–186 (KPAKDQPQKETAAPEPPSNPEVKKVNSGSAVPQAAP). Positions 108–133 (ELIPEPIPEPIPEPIPEPIREPPPPV) are enriched in pro residues.

Its subcellular location is the membrane. The chain is Testis-expressed protein 29 (Tex29) from Mus musculus (Mouse).